The sequence spans 486 residues: UDP-N-acetylmuramate--L-alanine ligase (486 aa).

126–132 (GTHGKTT) serves as a coordination point for ATP.

It belongs to the MurCDEF family.

It is found in the cytoplasm. It catalyses the reaction UDP-N-acetyl-alpha-D-muramate + L-alanine + ATP = UDP-N-acetyl-alpha-D-muramoyl-L-alanine + ADP + phosphate + H(+). It functions in the pathway cell wall biogenesis; peptidoglycan biosynthesis. Cell wall formation. The sequence is that of UDP-N-acetylmuramate--L-alanine ligase from Pectobacterium carotovorum subsp. carotovorum (strain PC1).